A 331-amino-acid chain; its full sequence is Probable zinc-binding oxidoreductase, mitochondrial (331 aa).

Residues 1 to 29 (MASVTSVPKTGRSVNQDVPATTLTLQTRP) show a composition bias toward polar residues. Positions 1–34 (MASVTSVPKTGRSVNQDVPATTLTLQTRPTPAPN) are disordered.

It belongs to the zinc-containing alcohol dehydrogenase family. Quinone oxidoreductase subfamily.

Its subcellular location is the mitochondrion. In Arthroderma benhamiae (strain ATCC MYA-4681 / CBS 112371) (Trichophyton mentagrophytes), this protein is Probable zinc-binding oxidoreductase, mitochondrial.